Reading from the N-terminus, the 476-residue chain is Glycogen synthase (476 aa).

An ADP-alpha-D-glucose-binding site is contributed by K15.

It belongs to the glycosyltransferase 1 family. Bacterial/plant glycogen synthase subfamily.

It catalyses the reaction [(1-&gt;4)-alpha-D-glucosyl](n) + ADP-alpha-D-glucose = [(1-&gt;4)-alpha-D-glucosyl](n+1) + ADP + H(+). The protein operates within glycan biosynthesis; glycogen biosynthesis. Its function is as follows. Synthesizes alpha-1,4-glucan chains using ADP-glucose. This chain is Glycogen synthase, found in Streptococcus equi subsp. zooepidemicus (strain H70).